The primary structure comprises 213 residues: 3-isopropylmalate dehydratase small subunit (213 aa).

Belongs to the LeuD family. LeuD type 1 subfamily. In terms of assembly, heterodimer of LeuC and LeuD.

The catalysed reaction is (2R,3S)-3-isopropylmalate = (2S)-2-isopropylmalate. It participates in amino-acid biosynthesis; L-leucine biosynthesis; L-leucine from 3-methyl-2-oxobutanoate: step 2/4. Functionally, catalyzes the isomerization between 2-isopropylmalate and 3-isopropylmalate, via the formation of 2-isopropylmaleate. The chain is 3-isopropylmalate dehydratase small subunit from Pseudomonas syringae pv. syringae (strain B728a).